A 1366-amino-acid polypeptide reads, in one-letter code: DNA-directed RNA polymerase subunit beta' (1366 aa).

The segment covering 1 to 23 has biased composition (basic residues); sequence MTSSKPKKSSRVRKTSKNSKKNN. The disordered stretch occupies residues 1–25; it reads MTSSKPKKSSRVRKTSKNSKKNNKI. Zn(2+)-binding residues include Cys-248, Cys-315, Cys-322, and Cys-325. The disordered stretch occupies residues 1290–1366; it reads DYTVDMPQSP…LQEEGLLSDE (77 aa). Residues 1295–1305 are compositionally biased toward polar residues; it reads MPQSPTVSSTA. Residues 1354-1366 show a composition bias toward low complexity; that stretch reads LEGLQEEGLLSDE.

Belongs to the RNA polymerase beta' chain family. RpoC2 subfamily. In terms of assembly, in cyanobacteria the RNAP catalytic core is composed of 2 alpha, 1 beta, 1 beta', 1 gamma and 1 omega subunit. When a sigma factor is associated with the core the holoenzyme is formed, which can initiate transcription. The cofactor is Zn(2+).

The catalysed reaction is RNA(n) + a ribonucleoside 5'-triphosphate = RNA(n+1) + diphosphate. DNA-dependent RNA polymerase catalyzes the transcription of DNA into RNA using the four ribonucleoside triphosphates as substrates. In Prochlorococcus marinus (strain MIT 9515), this protein is DNA-directed RNA polymerase subunit beta'.